The chain runs to 203 residues: Ribonuclease T (203 aa).

Residues 11-185 (VVVDVETGGF…YDTEKTAELF (175 aa)) form the Exonuclease domain. Mg(2+) contacts are provided by D14, E16, H172, and D177. H172 acts as the Proton donor/acceptor in catalysis.

The protein belongs to the RNase T family. Homodimer. The cofactor is Mg(2+).

Its function is as follows. Trims short 3' overhangs of a variety of RNA species, leaving a one or two nucleotide 3' overhang. Responsible for the end-turnover of tRNA: specifically removes the terminal AMP residue from uncharged tRNA (tRNA-C-C-A). Also appears to be involved in tRNA biosynthesis. The polypeptide is Ribonuclease T (Pseudomonas putida (strain ATCC 47054 / DSM 6125 / CFBP 8728 / NCIMB 11950 / KT2440)).